The chain runs to 83 residues: Small ribosomal subunit protein uS17 (83 aa).

It belongs to the universal ribosomal protein uS17 family. As to quaternary structure, part of the 30S ribosomal subunit.

In terms of biological role, one of the primary rRNA binding proteins, it binds specifically to the 5'-end of 16S ribosomal RNA. The sequence is that of Small ribosomal subunit protein uS17 from Zymomonas mobilis subsp. mobilis (strain ATCC 31821 / ZM4 / CP4).